The primary structure comprises 96 residues: Large ribosomal subunit protein bL28 (96 aa).

This sequence belongs to the bacterial ribosomal protein bL28 family.

In Methylobacterium nodulans (strain LMG 21967 / CNCM I-2342 / ORS 2060), this protein is Large ribosomal subunit protein bL28.